Reading from the N-terminus, the 1350-residue chain is Probable serine/threonine-protein kinase irlE (1350 aa).

N-linked (GlcNAc...) asparagine glycosylation is present at N37. Residues 149 to 169 (FWEILASCYGTISFIKFFNIF) traverse the membrane as a helical segment. Residues 731 to 802 (EAELKEKFEI…NIQQNYENQH (72 aa)) are a coiled coil. The segment covering 761-771 (LKKKNKLKKQK) has biased composition (basic residues). 2 disordered regions span residues 761 to 795 (LKKKNKLKKQKNQQQQQQAKQQAQQQKQQHQQNIQ) and 807 to 864 (RKFN…TTNS). Low complexity predominate over residues 772–795 (NQQQQQQAKQQAQQQKQQHQQNIQ). Positions 809–823 (FNQQTKGRPISPSSI) are enriched in polar residues. Over residues 824–864 (QNQNLNPTLLQNQNQTSNPTPNLESTKKATPTTTTTTTTNS) the composition is skewed to low complexity. Residues 903–1166 (KKESNILGRG…LSSVLKHPLF (264 aa)) form the Protein kinase domain. ATP is bound by residues 909 to 917 (LGRGSNGTL) and K932. D1034 serves as the catalytic Proton acceptor. The KEN domain occupies 1169–1346 (SLKKIKFLES…KNSIHFSNDT (178 aa)).

This sequence belongs to the protein kinase superfamily. Ser/Thr protein kinase family.

The protein resides in the membrane. The catalysed reaction is L-seryl-[protein] + ATP = O-phospho-L-seryl-[protein] + ADP + H(+). It carries out the reaction L-threonyl-[protein] + ATP = O-phospho-L-threonyl-[protein] + ADP + H(+). The chain is Probable serine/threonine-protein kinase irlE (irlE) from Dictyostelium discoideum (Social amoeba).